Consider the following 132-residue polypeptide: Galectin-2 (132 aa).

Residues 4–131 (ELEVKNMDMK…GFNMSSFKLK (128 aa)) enclose the Galectin domain. 65–71 (WGQEQRE) contributes to the a beta-D-galactoside binding site.

As to quaternary structure, homodimer.

Its function is as follows. This protein binds beta-galactoside. Its physiological function is not yet known. The protein is Galectin-2 (LGALS2) of Homo sapiens (Human).